A 373-amino-acid polypeptide reads, in one-letter code: Dual-specificity RNA methyltransferase RlmN (373 aa).

Glu-101 (proton acceptor) is an active-site residue. The Radical SAM core domain maps to Glu-107–Asp-350. Cysteines 114 and 355 form a disulfide. The [4Fe-4S] cluster site is built by Cys-121, Cys-125, and Cys-128. Residues Gly-179 to Glu-180, Ser-211, Ser-233 to His-235, and Asn-312 contribute to the S-adenosyl-L-methionine site. Cys-355 acts as the S-methylcysteine intermediate in catalysis.

Belongs to the radical SAM superfamily. RlmN family. It depends on [4Fe-4S] cluster as a cofactor.

The protein resides in the cytoplasm. The enzyme catalyses adenosine(2503) in 23S rRNA + 2 reduced [2Fe-2S]-[ferredoxin] + 2 S-adenosyl-L-methionine = 2-methyladenosine(2503) in 23S rRNA + 5'-deoxyadenosine + L-methionine + 2 oxidized [2Fe-2S]-[ferredoxin] + S-adenosyl-L-homocysteine. The catalysed reaction is adenosine(37) in tRNA + 2 reduced [2Fe-2S]-[ferredoxin] + 2 S-adenosyl-L-methionine = 2-methyladenosine(37) in tRNA + 5'-deoxyadenosine + L-methionine + 2 oxidized [2Fe-2S]-[ferredoxin] + S-adenosyl-L-homocysteine. Its function is as follows. Specifically methylates position 2 of adenine 2503 in 23S rRNA and position 2 of adenine 37 in tRNAs. m2A2503 modification seems to play a crucial role in the proofreading step occurring at the peptidyl transferase center and thus would serve to optimize ribosomal fidelity. In Blochmanniella pennsylvanica (strain BPEN), this protein is Dual-specificity RNA methyltransferase RlmN.